We begin with the raw amino-acid sequence, 151 residues long: UPF0735 ACT domain-containing protein SH1278 (151 aa).

An ACT domain is found at Thr74–Met149.

This sequence belongs to the UPF0735 family.

In Staphylococcus haemolyticus (strain JCSC1435), this protein is UPF0735 ACT domain-containing protein SH1278.